The primary structure comprises 392 residues: Tropomodulin (392 aa).

Disordered regions lie at residues 1–30 (MSQAKTDYYSEEKTFSAPSANSQQGTQLPS), 59–90 (DLNNDFDPDNSMLPPSQRCRDQTDKEPTGPYK), and 118–138 (QKRGKVYDSDSGRNSEEPENG). Residues 16-29 (SAPSANSQQGTQLP) show a composition bias toward polar residues. 2 stretches are compositionally biased toward basic and acidic residues: residues 76–90 (RCRDQTDKEPTGPYK) and 122–138 (KVYDSDSGRNSEEPENG).

The protein belongs to the tropomodulin family. As to quaternary structure, binds to the N-terminus of actin.

The protein resides in the cytoplasm. It localises to the cytoskeleton. Acts as the pointed end capping protein which maintains the length and dynamics of the actin filament. Blocks the elongation and depolymerization of the actin filaments at the pointed end. The protein is Tropomodulin (unc-94) of Caenorhabditis elegans.